We begin with the raw amino-acid sequence, 196 residues long: Late protein I196L (196 aa).

2 tandem repeats follow at residues serine 28–asparagine 48 and histidine 49–histidine 68. Residues isoleucine 69–serine 87 form a 3; approximate repeat.

The protein belongs to the asfivirus I196L family.

This chain is Late protein I196L, found in Ornithodoros (relapsing fever ticks).